The chain runs to 173 residues: Co-chaperone protein HscB homolog (173 aa).

A J domain is found at 5–77 (CHFALFELKP…PKRARYLLAM (73 aa)).

It belongs to the HscB family. Interacts with HscA and stimulates its ATPase activity.

Its function is as follows. Co-chaperone involved in the maturation of iron-sulfur cluster-containing proteins. Seems to help targeting proteins to be folded toward HscA. This is Co-chaperone protein HscB homolog from Pseudomonas syringae pv. tomato (strain ATCC BAA-871 / DC3000).